The following is a 407-amino-acid chain: Type II secretion system protein L (407 aa).

The Cytoplasmic segment spans residues 1–257 (MEGSVSEFLT…WLRYWQIWRK (257 aa)). The chain crosses the membrane as a helical span at residues 258 to 275 (VAIAAGLFVAVSISYSLF). The Periplasmic segment spans residues 276 to 407 (QAHQYEAQAD…VFGVFVVKPK (132 aa)).

It belongs to the GSP L family. Type II secretion system is composed of four main components: the outer membrane complex, the inner membrane complex, the cytoplasmic secretion ATPase and the periplasm-spanning pseudopilus. Forms homodimers. Interacts with EpsM/GspM. Interacts with EpsE/GspE and EpsF/GspF.

Its subcellular location is the cell inner membrane. Its function is as follows. Inner membrane component of the type II secretion system required for the energy-dependent secretion of extracellular factors such as proteases and toxins from the periplasm. Plays a role in the complex assembly and recruits EpsM resulting in a stable complex in the inner membrane. Provides thus a link between the energy-providing EpsE protein in the cytoplasm and the rest of the T2SS machinery. The sequence is that of Type II secretion system protein L (epsL) from Vibrio cholerae serotype O1 (strain ATCC 39315 / El Tor Inaba N16961).